Here is a 276-residue protein sequence, read N- to C-terminus: Protease HtpX homolog (276 aa).

Residues 16 to 36 (LFIWFGGMIAGQTGMVIAFLV) traverse the membrane as a helical segment. His-130 serves as a coordination point for Zn(2+). Glu-131 is a catalytic residue. His-134 is a Zn(2+) binding site. 2 helical membrane passes run 142-162 (IGTV…FGMF) and 173-193 (IFVM…IQMT). Residue Glu-199 coordinates Zn(2+).

Belongs to the peptidase M48B family. The cofactor is Zn(2+).

It is found in the cell inner membrane. This Sulfurovum sp. (strain NBC37-1) protein is Protease HtpX homolog.